We begin with the raw amino-acid sequence, 177 residues long: Peptide methionine sulfoxide reductase MsrA 2 (177 aa).

Residue Cys-12 is part of the active site.

The protein belongs to the MsrA Met sulfoxide reductase family.

The catalysed reaction is L-methionyl-[protein] + [thioredoxin]-disulfide + H2O = L-methionyl-(S)-S-oxide-[protein] + [thioredoxin]-dithiol. The enzyme catalyses [thioredoxin]-disulfide + L-methionine + H2O = L-methionine (S)-S-oxide + [thioredoxin]-dithiol. Has an important function as a repair enzyme for proteins that have been inactivated by oxidation. Catalyzes the reversible oxidation-reduction of methionine sulfoxide in proteins to methionine. The sequence is that of Peptide methionine sulfoxide reductase MsrA 2 (msrA2) from Staphylococcus aureus (strain NCTC 8325 / PS 47).